The chain runs to 212 residues: Stringent starvation protein A (212 aa).

Residues serine 9–proline 87 enclose the GST N-terminal domain. The GST C-terminal domain maps to tyrosine 92–leucine 209.

The protein belongs to the GST superfamily. HSP26 family.

In terms of biological role, forms an equimolar complex with the RNA polymerase holoenzyme (RNAP) but not with the core enzyme. The protein is Stringent starvation protein A (sspA) of Escherichia coli O157:H7.